A 542-amino-acid polypeptide reads, in one-letter code: Putative ankyrin repeat protein FPV115 (542 aa).

ANK repeat units follow at residues 33–62, 157–186, 218–247, 251–281, 285–314, 316–345, 347–375, and 378–407; these read FRNL…DPNS, DGLL…KTNL, NDIN…DINT, KGKT…DINV, EGLT…DVKV, TTST…EFIT, DYLS…DVNS, and CIST…NINA.

The chain is Putative ankyrin repeat protein FPV115 from Fowlpox virus (strain NVSL) (FPV).